We begin with the raw amino-acid sequence, 271 residues long: MVEIVEEPDDHQSSSTGAGSSGSSSAPPPPPPPAYSSISQYVSANTMECVLFAARVLTVFFALNYMIPFIGLVPAHSAYYKIFAASAATFALRLHTRIQGQFALNAQFIQRLIIEDSFHYLVYSVVFLMAAPVSMAALPVTIYAALHACTFMTKILRETGHTSSIIPKLEQFTAHQTQNALGIIACSEIFLVPLLVSLIFSGKGSLLLPFAYYRFLSLRYASRRNPSTRQAFAQMRGSLQNVAMSSSCPRPISSLIYRAIDFISARAPPVM.

Residues 1 to 32 (MVEIVEEPDDHQSSSTGAGSSGSSSAPPPPPP) form a disordered region. The span at 13–25 (SSSTGAGSSGSSS) shows a compositional bias: low complexity. The next 3 membrane-spanning stretches (helical) occupy residues 56–76 (VLTV…VPAH), 125–145 (VVFL…IYAA), and 180–200 (ALGI…SLIF).

It belongs to the PER33/POM33 family.

It is found in the membrane. This Caenorhabditis elegans protein is Transmembrane protein 33 homolog.